The following is a 149-amino-acid chain: MVLTKDEFDSLLHELDPKIDTEEHRMELGLGAYTELFAAHPEYIKKFSRLQEATPANVMAQDGAKYYAKTLINDLVELLKASTDEATLNTAIARTATKDHKPRNVSGAEFQTGEPIFIKYFSHVLTTPANQAFMEKLLTKIFTGVAGQL.

The region spanning 2–149 (VLTKDEFDSL…KIFTGVAGQL (148 aa)) is the Globin domain. H100 provides a ligand contact to heme.

Belongs to the globin family. As to quaternary structure, monomer.

In terms of biological role, oxygen binding protein. In Isoparorchis hypselobagri (Giant trematode), this protein is Globin.